The primary structure comprises 216 residues: Probable nicotinate-nucleotide adenylyltransferase (216 aa).

It belongs to the NadD family.

It carries out the reaction nicotinate beta-D-ribonucleotide + ATP + H(+) = deamido-NAD(+) + diphosphate. Its pathway is cofactor biosynthesis; NAD(+) biosynthesis; deamido-NAD(+) from nicotinate D-ribonucleotide: step 1/1. Functionally, catalyzes the reversible adenylation of nicotinate mononucleotide (NaMN) to nicotinic acid adenine dinucleotide (NaAD). This Shewanella baltica (strain OS195) protein is Probable nicotinate-nucleotide adenylyltransferase.